Here is a 558-residue protein sequence, read N- to C-terminus: Membrane protein insertase YidC (558 aa).

A run of 5 helical transmembrane segments spans residues 3–23 (IKRT…FDNW), 364–384 (FVGN…AVFF), 438–458 (LPVV…LASV), 477–497 (PYFI…KLNP), and 508–528 (MMFM…GLVL).

This sequence belongs to the OXA1/ALB3/YidC family. Type 1 subfamily. As to quaternary structure, interacts with the Sec translocase complex via SecD. Specifically interacts with transmembrane segments of nascent integral membrane proteins during membrane integration.

Its subcellular location is the cell inner membrane. Its function is as follows. Required for the insertion and/or proper folding and/or complex formation of integral membrane proteins into the membrane. Involved in integration of membrane proteins that insert both dependently and independently of the Sec translocase complex, as well as at least some lipoproteins. Aids folding of multispanning membrane proteins. The chain is Membrane protein insertase YidC from Burkholderia pseudomallei (strain 668).